The sequence spans 335 residues: Glyceraldehyde-3-phosphate dehydrogenase, cytosolic (335 aa).

NAD(+)-binding positions include 13–14 (RI), aspartate 35, and arginine 80. D-glyceraldehyde 3-phosphate contacts are provided by residues 151–153 (SCT), threonine 182, 211–212 (TG), and arginine 234. The Nucleophile role is filled by cysteine 152. Asparagine 316 contributes to the NAD(+) binding site.

It belongs to the glyceraldehyde-3-phosphate dehydrogenase family. As to quaternary structure, homotetramer.

Its subcellular location is the cytoplasm. It carries out the reaction D-glyceraldehyde 3-phosphate + phosphate + NAD(+) = (2R)-3-phospho-glyceroyl phosphate + NADH + H(+). It functions in the pathway carbohydrate degradation; glycolysis; pyruvate from D-glyceraldehyde 3-phosphate: step 1/5. This chain is Glyceraldehyde-3-phosphate dehydrogenase, cytosolic (GAPC), found in Chondrus crispus (Carrageen Irish moss).